The primary structure comprises 625 residues: MAIRQLPEILINQIAAGEVVERPASVVKELVENALDAGATRVDIELEEGGVRLIRIRDNGGGITPDELPLAVSRHATSKIASLDDLETVATLGFRGEALPSIASVSRFTLTSRRHDAEHGSALEIDGGRLGEVVPRAHAPGTTVEVRELFFNVPARRKFLRAERTELGHIEEWLRSLALARPDVELRVSHNGKPSRRYKPGDLYSDARLGETLGDDFARQALRVDHSGAGLRLHGWVAQPHYSRASTDQQYLYVNGRSVRERSVAHAVKMAYGDVLFHGRQPAYVLFLELDPARVDVNVHPAKHEVRFREARLIHDFVYRTLQDALAHTRAGATPNSIGGDGTGYTAATSGGMGGIASGGVPGNGGASIGSGGAYSYASWTPSQTPLGLRVDEARAAYSALYAPPPSSAQQSAGMPNMAGTGLPATAQDSGVPPLGYAIAQLHGIYILAENAEGLIVVDMHAAHERIGYERLKHAHDSIGLHAQPLLVPMTLAVGEREADTAEREAETLATLGFEITRAGPQSLHVRSIPALLANAEPEALLRDVLSDLREHGQSRRIASARDELLSTMACHGAVRANRRLTVPEMNALLRDMEATERSGQCNHGRPTWARFTLSDIDRWFLRGR.

Belongs to the DNA mismatch repair MutL/HexB family.

Its function is as follows. This protein is involved in the repair of mismatches in DNA. It is required for dam-dependent methyl-directed DNA mismatch repair. May act as a 'molecular matchmaker', a protein that promotes the formation of a stable complex between two or more DNA-binding proteins in an ATP-dependent manner without itself being part of a final effector complex. The sequence is that of DNA mismatch repair protein MutL from Xanthomonas axonopodis pv. citri (strain 306).